A 612-amino-acid polypeptide reads, in one-letter code: Lipoma-preferred partner (612 aa).

Disordered stretches follow at residues 1–118 (MSHP…SSLD) and 132–219 (ECSS…SSRP). The span at 26 to 40 (THSFGNPSISVSTQQ) shows a compositional bias: polar residues. Residues 41-53 (PPKKFAPVVAPKP) show a composition bias toward low complexity. At Lys108 the chain carries N6-acetyllysine. 2 positions are modified to phosphoserine: Ser116 and Ser151. 2 stretches are compositionally biased toward polar residues: residues 143 to 158 (QSST…STPV) and 171 to 181 (PLTATKKSTLK). A compositionally biased stretch (pro residues) spans 183–193 (QPAPQAGPIPV). Residues 209-219 (SYTTASTSSRP) are compositionally biased toward polar residues. Phosphotyrosine occurs at positions 244 and 301. The tract at residues 307-387 (YGGRNDSDPT…LGPSSVAPSF (81 aa)) is disordered. Residues 314 to 323 (DPTYGQQGHP) show a composition bias toward polar residues. Lys327 participates in a covalent cross-link: Glycyl lysine isopeptide (Lys-Gly) (interchain with G-Cter in SUMO1). Thr333 is subject to Phosphothreonine. A Phosphoserine modification is found at Ser375. LIM zinc-binding domains lie at 414-473 (GRCA…INTL), 474-534 (EQCN…KFAP), and 535-603 (RCSV…RIRV).

Belongs to the zyxin/ajuba family. Interacts with VASP, with PDZ domains of SCRIB and with ACTN1/alpha-actinin. Expressed in a wide variety of tissues but no or very low expression in brain and peripheral leukocytes.

Its subcellular location is the nucleus. The protein resides in the cytoplasm. It localises to the cell junction. The protein localises to the cell membrane. In terms of biological role, may play a structural role at sites of cell adhesion in maintaining cell shape and motility. In addition to these structural functions, it may also be implicated in signaling events and activation of gene transcription. May be involved in signal transduction from cell adhesion sites to the nucleus allowing successful integration of signals arising from soluble factors and cell-cell adhesion sites. Also suggested to serve as a scaffold protein upon which distinct protein complexes are assembled in the cytoplasm and in the nucleus. This chain is Lipoma-preferred partner (LPP), found in Homo sapiens (Human).